A 1177-amino-acid chain; its full sequence is DNA-directed RNA polymerase subunit beta (1177 aa).

Acidic residues predominate over residues 1147–1161 (DDTEIEMRDTEDDDD). The disordered stretch occupies residues 1147 to 1177 (DDTEIEMRDTEDDDDHQSADKLNVEVETTKE). Over residues 1162–1177 (HQSADKLNVEVETTKE) the composition is skewed to basic and acidic residues.

The protein belongs to the RNA polymerase beta chain family. In terms of assembly, the RNAP catalytic core consists of 2 alpha, 1 beta, 1 beta' and 1 omega subunit. When a sigma factor is associated with the core the holoenzyme is formed, which can initiate transcription.

It catalyses the reaction RNA(n) + a ribonucleoside 5'-triphosphate = RNA(n+1) + diphosphate. Functionally, DNA-dependent RNA polymerase catalyzes the transcription of DNA into RNA using the four ribonucleoside triphosphates as substrates. This is DNA-directed RNA polymerase subunit beta from Bacillus cereus (strain G9842).